Here is a 170-residue protein sequence, read N- to C-terminus: 4-hydroxyphenylacetate 3-monooxygenase reductase component (170 aa).

Belongs to the non-flavoprotein flavin reductase family. HpaC subfamily. Monomer. HPA 3-hydroxylase consists of a reductase component HpaC and an oxygenase component HpaB. Some form of interactions between the reductase and the oxygenase facilitate the transfer of FADH(-) to the oxygenase in P.aeruginosa, although interactions are not required in other species.

The enzyme catalyses FADH2 + NAD(+) = FAD + NADH + 2 H(+). The protein operates within aromatic compound metabolism; 4-hydroxyphenylacetate degradation; pyruvate and succinate semialdehyde from 4-hydroxyphenylacetate: step 1/7. The rate of FAD reduction is independent of the presence of HPA, demonstrating that, in contrast to HPAH from A.baumannii, the activity of the HPAH reductase is not allosterically regulated by the substrate. Its function is as follows. Reductase component of the 4-hydroxyphenylacetate (HPA) 3-hydroxylase. Catalyzes the reduction of FAD by NADH. The reduced flavin is then transferred to the oxygenase component HpaB. Is also able to reduce FMN and riboflavin, but preferentially binds FAD. Has no activity with NADPH as the reductant. In Pseudomonas aeruginosa (strain ATCC 15692 / DSM 22644 / CIP 104116 / JCM 14847 / LMG 12228 / 1C / PRS 101 / PAO1), this protein is 4-hydroxyphenylacetate 3-monooxygenase reductase component.